Consider the following 937-residue polypeptide: Isoleucine--tRNA ligase (937 aa).

Residues 58–68 (PYANGDIHIGH) carry the 'HIGH' region motif. E561 is an L-isoleucyl-5'-AMP binding site. The 'KMSKS' region motif lies at 602 to 606 (KMSKS). K605 serves as a coordination point for ATP. Zn(2+)-binding residues include C900, C903, C920, and C923.

Belongs to the class-I aminoacyl-tRNA synthetase family. IleS type 1 subfamily. In terms of assembly, monomer. Requires Zn(2+) as cofactor.

The protein localises to the cytoplasm. The enzyme catalyses tRNA(Ile) + L-isoleucine + ATP = L-isoleucyl-tRNA(Ile) + AMP + diphosphate. In terms of biological role, catalyzes the attachment of isoleucine to tRNA(Ile). As IleRS can inadvertently accommodate and process structurally similar amino acids such as valine, to avoid such errors it has two additional distinct tRNA(Ile)-dependent editing activities. One activity is designated as 'pretransfer' editing and involves the hydrolysis of activated Val-AMP. The other activity is designated 'posttransfer' editing and involves deacylation of mischarged Val-tRNA(Ile). In Alcanivorax borkumensis (strain ATCC 700651 / DSM 11573 / NCIMB 13689 / SK2), this protein is Isoleucine--tRNA ligase.